The sequence spans 332 residues: MKVTFEELKGAFYRVLRSRNIAEDTADECAEMFARTTESGVYSHGVNRFPRFIQQLDNGDIIPDAKPQRVTSLGAIEQWDAQRAIGNLTAKKMMDRAIELASDHGIGLVALRNANHWMRGGSYGWQAAEKGYIGICWTNSIAVMPPWGAKECRIGTNPLIVAIPSTPITMVDMSMSMFSYGMLEVNRLAGRELPVDGGFDDNGQLTKEPGVIEKNRRILPMGYWKGSGLSIVLDMIATLLSNGSSVAEVTQENSDEYGVSQIFIAIEVDKLIDGATRDAKLQRIMDFITTAERADDNVAIRLPGHEFTKLLDDNRRHGITIDDSVWAKIQAL.

H44 acts as the Proton donor in catalysis. Residues 168–174, 224–225, and 304–306 each bind NAD(+); these read ITMVDMS, WK, and GHE.

It belongs to the LDH2/MDH2 oxidoreductase family. DlgD subfamily. In terms of assembly, homodimer.

It localises to the cytoplasm. The enzyme catalyses 3-dehydro-L-gulonate + NAD(+) = 2,3-dioxo-L-gulonate + NADH + H(+). It catalyses the reaction 3-dehydro-L-gulonate + NADP(+) = 2,3-dioxo-L-gulonate + NADPH + H(+). Its function is as follows. Catalyzes the reduction of 2,3-diketo-L-gulonate in the presence of NADH, to form 3-keto-L-gulonate. The protein is 2,3-diketo-L-gulonate reductase of Salmonella typhimurium (strain LT2 / SGSC1412 / ATCC 700720).